The primary structure comprises 284 residues: MEMO1 family protein MmarC5_0191 (284 aa).

The protein belongs to the MEMO1 family.

In Methanococcus maripaludis (strain C5 / ATCC BAA-1333), this protein is MEMO1 family protein MmarC5_0191.